Reading from the N-terminus, the 507-residue chain is Proton-coupled zinc antiporter SLC30A1 (507 aa).

Over 1 to 10 the chain is Cytoplasmic; sequence MGCWGRNRGR. Residues 11–31 form a helical membrane-spanning segment; it reads LLCMLALTFMFMVLEVVVSRV. Topologically, residues 32–35 are extracellular; sequence TSSL. Residues 36–56 traverse the membrane as a helical segment; it reads AMLSDSFHMLSDVLALVVALV. 2 residues coordinate Zn(2+): His43 and Asp47. At 57 to 78 the chain is on the cytoplasmic side; sequence AERFARRTHATQKNTFGWIRAE. A helical membrane pass occupies residues 79–99; sequence VMGALVNAIFLTGLCFAILLE. Topologically, residues 100 to 113 are extracellular; sequence AIERFIEPHEMQQP. The chain crosses the membrane as a helical span at residues 114–134; it reads LVVLGVGVAGLLVNVLGLCLF. The Cytoplasmic portion of the chain corresponds to 135-248; sequence HHHSGFSQDS…RAGQLNMRGV (114 aa). Residues 142–217 are disordered; the sequence is QDSGHGHSHG…DPENPRSGDT (76 aa). A 6 X 2 AA approximate repeats of H-G region spans residues 146–158; it reads HGHSHGGHGHGHG. Residues 147–167 are compositionally biased toward basic residues; the sequence is GHSHGGHGHGHGLPKGPRVKS. The segment covering 189–201 has biased composition (polar residues); sequence TNTLVANTSNSNG. The helical transmembrane segment at 249–269 threads the bilayer; it reads FLHVLGDALGSVIVVVNALVF. Zn(2+)-binding residues include His251 and Asp255. Residues 270–308 lie on the Extracellular side of the membrane; it reads YFSWKGCSEGDFCVNPCFPDPCKAFVEIINSTHASVYEA. N-linked (GlcNAc...) asparagine glycosylation occurs at Asn299. A helical membrane pass occupies residues 309–329; the sequence is GPCWVLYLDPTLCVVMVCILL. The Cytoplasmic segment spans residues 330–507; it reads YTTYPLLKES…MPNKQPESSL (178 aa). A Phosphoserine modification is found at Ser506.

It belongs to the cation diffusion facilitator (CDF) transporter (TC 2.A.4) family. SLC30A subfamily. Homodimer. Interacts with TMEM163. Interacts and forms a complex with TMC6 and TMC8; the interaction regulates zinc transport into the ER. As to quaternary structure, (Microbial infection) Interacts with human papillomavirus 16/HPV16 protein E5; the interaction alleviates SLC30A1-mediated transcription factors inhibition. In terms of processing, N-glycosylated at Asn-299. N-glycosylation promotes endocytosis and degradation through the proteasomal or lysosomal pathways.

The protein localises to the cell membrane. It is found in the basolateral cell membrane. Its subcellular location is the cytoplasmic vesicle membrane. The protein resides in the cytoplasm. It localises to the endoplasmic reticulum membrane. The protein localises to the golgi apparatus membrane. It is found in the nucleus membrane. It carries out the reaction Zn(2+)(in) + 2 H(+)(out) = Zn(2+)(out) + 2 H(+)(in). Functionally, zinc ion:proton antiporter that could function at the plasma membrane mediating zinc efflux from cells against its electrochemical gradient protecting them from intracellular zinc accumulation and toxicity. Alternatively, could prevent the transport to the plasma membrane of CACNB2, the L-type calcium channels regulatory subunit, through a yet to be defined mechanism. By modulating the expression of these channels at the plasma membrane, could prevent calcium and zinc influx into cells. By the same mechanism, could also prevent L-type calcium channels-mediated heavy metal influx into cells. In some cells, could also function as a zinc ion:proton antiporter mediating zinc entry into the lumen of cytoplasmic vesicles. In macrophages, can increase zinc ions concentration into the lumen of cytoplasmic vesicles containing engulfed bacteria and could help inactivate them. Forms a complex with TMC6/EVER1 and TMC8/EVER2 at the ER membrane of keratynocytes which facilitates zinc uptake into the ER. Down-regulates the activity of transcription factors induced by zinc and cytokines. The polypeptide is Proton-coupled zinc antiporter SLC30A1 (Homo sapiens (Human)).